A 329-amino-acid chain; its full sequence is Beta-ketoacyl-[acyl-carrier-protein] synthase III (329 aa).

Catalysis depends on residues C123 and H256. The tract at residues 257 to 261 (QANIR) is ACP-binding. Residue N286 is part of the active site.

Belongs to the thiolase-like superfamily. FabH family. As to quaternary structure, homodimer.

It is found in the cytoplasm. It catalyses the reaction malonyl-[ACP] + acetyl-CoA + H(+) = 3-oxobutanoyl-[ACP] + CO2 + CoA. Its pathway is lipid metabolism; fatty acid biosynthesis. In terms of biological role, catalyzes the condensation reaction of fatty acid synthesis by the addition to an acyl acceptor of two carbons from malonyl-ACP. Catalyzes the first condensation reaction which initiates fatty acid synthesis and may therefore play a role in governing the total rate of fatty acid production. Possesses both acetoacetyl-ACP synthase and acetyl transacylase activities. Its substrate specificity determines the biosynthesis of branched-chain and/or straight-chain of fatty acids. This is Beta-ketoacyl-[acyl-carrier-protein] synthase III from Burkholderia lata (strain ATCC 17760 / DSM 23089 / LMG 22485 / NCIMB 9086 / R18194 / 383).